Consider the following 334-residue polypeptide: Ornithine carbamoyltransferase, catabolic (334 aa).

Carbamoyl phosphate is bound by residues 57 to 60 (STRT), Gln84, Arg108, and 135 to 138 (HPTQ). L-ornithine contacts are provided by residues Asn169, Asp233, and 237 to 238 (SM). Residues 275-276 (CL) and Arg320 each bind carbamoyl phosphate.

It belongs to the aspartate/ornithine carbamoyltransferase superfamily. OTCase family.

Its subcellular location is the cytoplasm. The enzyme catalyses carbamoyl phosphate + L-ornithine = L-citrulline + phosphate + H(+). It participates in amino-acid degradation; L-arginine degradation via ADI pathway; carbamoyl phosphate from L-arginine: step 2/2. Its function is as follows. Reversibly catalyzes the transfer of the carbamoyl group from carbamoyl phosphate (CP) to the N(epsilon) atom of ornithine (ORN) to produce L-citrulline. The chain is Ornithine carbamoyltransferase, catabolic (arcB) from Salmonella typhimurium (strain LT2 / SGSC1412 / ATCC 700720).